Consider the following 284-residue polypeptide: Tropomyosin Lep s 1.0101 (284 aa).

Residues 1 to 273 are a coiled coil; sequence MEAIKKKMQA…KDRYRALADE (273 aa). Residues 155–171 show a composition bias toward basic and acidic residues; that stretch reads AEDADGKSDEVSRKMAQ. The interval 155–187 is disordered; sequence AEDADGKSDEVSRKMAQVEDDLEVAEDRVKSGD.

This sequence belongs to the tropomyosin family. Homodimer.

In terms of biological role, tropomyosin, in association with the troponin complex, plays a central role in the calcium dependent regulation of muscle contraction. The polypeptide is Tropomyosin Lep s 1.0101 (Lepisma saccharinum (Silverfish)).